Consider the following 943-residue polypeptide: Nuclear receptor coactivator 7 (943 aa).

Met1 is subject to N-acetylmethionine. Residues 1–15 are compositionally biased toward basic and acidic residues; it reads MDTKEEKKEQKERKQ. Positions 1 to 32 form a coiled coil; it reads MDTKEEKKEQKERKQSYFARLKKKKQAKQNAE. A disordered region spans residues 1 to 83; it reads MDTKEEKKEQ…RKSNQLKEIR (83 aa). Ser92 carries the phosphoserine modification. In terms of domain architecture, LysM spans 117 to 160; that stretch reads MEYTAGSQDTLNSVALKFNVTPNKLVELNKLFTHTIVPGQVLFV. A Phosphothreonine modification is found at Thr137. The tract at residues 169–189 is disordered; it reads TIQLSSSTPGATVSPSSSDAE. Polar residues predominate over residues 177-187; that stretch reads PGATVSPSSSD. Phosphoserine occurs at positions 182, 186, 211, 212, and 214. The disordered stretch occupies residues 334–369; sequence EKRQQNGERTLALDAKSVRSPEESTERTCTRIEPPD. Residues 349 to 369 show a composition bias toward basic and acidic residues; the sequence is KSVRSPEESTERTCTRIEPPD. 3 positions are modified to phosphoserine: Ser442, Ser498, and Ser500. Over residues 486-499 the composition is skewed to basic and acidic residues; it reads EKQDEAPEVDKHSG. 2 disordered regions span residues 486 to 507 and 543 to 576; these read EKQD…LGES and LSDR…NKEP. The TLDc domain occupies 782–943; sequence ALLENMHIEQ…VQDLEVWTFE (162 aa).

The protein belongs to the OXR1 family. Interacts with ESR1, ESR2A, ESR2B, THRB, PPARG and RARA in a ligand-inducible manner. Interacts with the heterodimer AHR-ARNT. In terms of tissue distribution, highly expressed in brain and kidney. Weakly expressed in mammary gland, lung and testis. In brain, expression is found in neurons of cerebral cortex, thalamus, hypothalamus, hippocampus, cerebellum, striatum and choroid plexus.

It is found in the nucleus. Enhances the transcriptional activities of several nuclear receptors. Involved in the coactivation of different nuclear receptors, such as ESR1, THRB, PPARG and RARA. The sequence is that of Nuclear receptor coactivator 7 (Ncoa7) from Mus musculus (Mouse).